The primary structure comprises 134 residues: Large ribosomal subunit protein bL12 (134 aa).

The protein belongs to the bacterial ribosomal protein bL12 family. In terms of assembly, homodimer. Part of the ribosomal stalk of the 50S ribosomal subunit. Forms a multimeric L10(L12)X complex, where L10 forms an elongated spine to which 2 to 4 L12 dimers bind in a sequential fashion. Binds GTP-bound translation factors.

In terms of biological role, forms part of the ribosomal stalk which helps the ribosome interact with GTP-bound translation factors. Is thus essential for accurate translation. This is Large ribosomal subunit protein bL12 from Anaplasma phagocytophilum (strain HZ).